The following is a 719-amino-acid chain: Protein lin-15A (719 aa).

Disordered regions lie at residues 179–199 (FSHF…EGSQ), 419–464 (YRDH…SISW), 559–626 (LTTA…PTKT), and 684–719 (AKQV…EPIF). The span at 570 to 579 (STSTDSSSSS) shows a compositional bias: low complexity. The span at 604–617 (LLQNKPTHVESSSP) shows a compositional bias: polar residues. Basic and acidic residues predominate over residues 693–719 (EPKHIPPTHMEKKPEELLMDPKPEPIF).

Its subcellular location is the nucleus. In terms of biological role, synthetic multivulva (synMuv) class A protein. SynMuv proteins are required to repress the induction of vulval development. Acts redundantly with SynMuv class B protein lin-15B, and lin-35 to negatively regulate vulval development, most likely through antagonization of the Ras-signaling pathway. May also negatively regulate vulval development in association with other SynMuv class B proteins such as dpl-1 and efl-1. Regulates let-23 basal activity. Required for the correct expression and/or stability of lin-56. This Caenorhabditis elegans protein is Protein lin-15A.